We begin with the raw amino-acid sequence, 215 residues long: Large ribosomal subunit protein uL4 (215 aa).

A disordered region spans residues 43–100 (AAKRQGTHSTKTRGEVSGGGKKPYRQKGSGRARQGSTRAPQFTGGGTVHGPKPRDYSQ).

The protein belongs to the universal ribosomal protein uL4 family. In terms of assembly, part of the 50S ribosomal subunit.

Functionally, one of the primary rRNA binding proteins, this protein initially binds near the 5'-end of the 23S rRNA. It is important during the early stages of 50S assembly. It makes multiple contacts with different domains of the 23S rRNA in the assembled 50S subunit and ribosome. Its function is as follows. Forms part of the polypeptide exit tunnel. The protein is Large ribosomal subunit protein uL4 of Mycolicibacterium smegmatis (Mycobacterium smegmatis).